We begin with the raw amino-acid sequence, 585 residues long: Beta-(1--&gt;2)glucan export ATP-binding/permease protein NdvA (585 aa).

One can recognise an ABC transmembrane type-1 domain in the interval 21-301; sequence VGAIVIANIV…MKAFATQIFE (281 aa). A run of 6 helical transmembrane segments spans residues 22–42, 55–75, 136–156, 158–178, 245–265, and 269–289; these read GAIV…PILF, VAPM…AFVL, QHLA…AMDV, LSLI…VVMS, LNRI…TVLV, and ELGV…IGRL. Positions 335–569 constitute an ABC transporter domain; the sequence is VEFRDISFDF…NGRFAALLRA (235 aa). ATP is bound at residue 368–375; sequence GPTGAGKT.

This sequence belongs to the ABC transporter superfamily. Beta-(1--&gt;2)glucan exporter (TC 3.A.1.108.1) family. In terms of assembly, homodimer.

The protein resides in the cell inner membrane. It carries out the reaction [(1-&gt;2)-beta-D-glucosyl](n)(in) + ATP + H2O = [(1-&gt;2)-beta-D-glucosyl](n)(out) + ADP + phosphate + H(+). Involved in beta-(1--&gt;2)glucan export which is required for nodulation of legume roots. May be involved in other classes of oligosaccharides export. Transmembrane domains (TMD) form a pore in the inner membrane and the ATP-binding domain (NBD) is responsible for energy generation. The polypeptide is Beta-(1--&gt;2)glucan export ATP-binding/permease protein NdvA (Rhizobium meliloti (strain 1021) (Ensifer meliloti)).